A 558-amino-acid polypeptide reads, in one-letter code: Formate--tetrahydrofolate ligase (558 aa).

67 to 74 (TPAGEGKT) serves as a coordination point for ATP.

It belongs to the formate--tetrahydrofolate ligase family.

The catalysed reaction is (6S)-5,6,7,8-tetrahydrofolate + formate + ATP = (6R)-10-formyltetrahydrofolate + ADP + phosphate. The protein operates within one-carbon metabolism; tetrahydrofolate interconversion. In Ruegeria sp. (strain TM1040) (Silicibacter sp.), this protein is Formate--tetrahydrofolate ligase.